A 123-amino-acid chain; its full sequence is Defensin beta 118 (123 aa).

The first 19 residues, Met-1–Pro-19, serve as a signal peptide directing secretion. Cystine bridges form between Cys-27-Cys-54, Cys-34-Cys-48, and Cys-38-Cys-55. Positions Val-65–Ser-123 are excised as a propeptide. Residues Lys-100–Arg-110 are compositionally biased toward basic and acidic residues. The tract at residues Lys-100–Ser-123 is disordered. Positions Thr-112 to Ser-123 are enriched in polar residues.

This sequence belongs to the beta-defensin family. In terms of processing, the three-dimensional structure formed by the three intramolecular disulfide bridges is indispensable for antimicrobial activity.

The protein localises to the secreted. Functionally, host defense peptide that exhibits antimicrobial activity against both Gram-negative bacteria, such as E.coli and S.typhimurium, and Gram-positive bacteria, such as S.aureus and B.subtilis. Inhibits cell adhesion of E.coli on intestinal epithelial enterocytes. Causes rapid permeabilization of both the outer and inner membrane of E.coli, leading to morphological alterations on the bacterial surface. Binds to bacterial lipopolysaccharides (LPS) with high affinity, and may thereby be involved in immunoregulation through LPS neutralization. May contribute to epididymal innate immunity and protect the sperm against attack by microorganisms. The polypeptide is Defensin beta 118 (DEFB118) (Gorilla gorilla gorilla (Western lowland gorilla)).